The primary structure comprises 284 residues: Orotidine 5'-phosphate decarboxylase (284 aa).

Residues Asp42, 64 to 66 (KTH), 96 to 105 (DRKFADIGNT), Tyr237, and Arg255 contribute to the substrate site. The Proton donor role is filled by Lys98.

The protein belongs to the OMP decarboxylase family.

The catalysed reaction is orotidine 5'-phosphate + H(+) = UMP + CO2. It participates in pyrimidine metabolism; UMP biosynthesis via de novo pathway; UMP from orotate: step 2/2. The protein is Orotidine 5'-phosphate decarboxylase (URA3) of Magnusiomyces magnusii (Yeast).